We begin with the raw amino-acid sequence, 723 residues long: Homeobox protein HAT3.1 (723 aa).

Over residues 1–10 (MYKAVSKRVT) the composition is skewed to basic residues. 2 disordered regions span residues 1-94 (MYKA…GSHR) and 135-173 (KRAQRSKEDAGPSSVVANSTPVGRPKKKNKTMNKGQVRE). The span at 11-23 (RSSGSGLKQTNVD) shows a compositional bias: polar residues. A compositionally biased stretch (basic and acidic residues) spans 58-83 (LHHEIMDHGKGNEEQKPTPQTVKKDS). The segment at 265 to 322 (DIFCAKCGSKDLSVDNDIILCDGFCDRGFHQYCLEPPLRKEDIPPDDEGWLCPGCDCK) adopts a PHD-type zinc-finger fold. Disordered stretches follow at residues 357–628 (GGQN…KTQR) and 680–723 (VEKL…RRRK). Positions 365-407 (LPSDDSDDEEYDPDCLNDNENDEDGSDDNEESENEDGSSDETE) are enriched in acidic residues. A compositionally biased stretch (basic and acidic residues) spans 417–427 (ESFKEGKDIMK). The span at 435-453 (DDSEDDDYDPDAPTCDDDK) shows a compositional bias: acidic residues. Basic and acidic residues-rich tracts occupy residues 518–530 (RNVERLDYKKLYD) and 547–556 (DKTARMGKED). The segment covering 580-589 (KKLIRKSKRA) has biased composition (basic residues). A DNA-binding region (homeobox) is located at residues 614–673 (SSSSACKQTDPKTQRLYISFQENQYPDKATKESLAKELQMTVKQVNNWFKHRRWSINSKP). Residues 680-690 (VEKLKTGKEGE) are compositionally biased toward basic and acidic residues. A compositionally biased stretch (polar residues) spans 695 to 705 (VAGSSKQTMET).

This sequence belongs to the PHD-associated homeobox family. Primarily detected in root tissue.

It localises to the nucleus. Its function is as follows. Binds only to large DNA fragments. Recognizes a DNA fragment carrying 8 copies of box7 motif of the light-induced cab-E promoter of Nicotiana plumbaginifolia. Also recognizes the box7m1 motif. The protein is Homeobox protein HAT3.1 (HAT3.1) of Arabidopsis thaliana (Mouse-ear cress).